The primary structure comprises 85 residues: Toxin AahP1005 (85 aa).

The N-terminal stretch at 1–19 (MNYLVMISLALLFMTGVES) is a signal peptide. The LCN-type CS-alpha/beta domain maps to 21 to 83 (KDGYIVDDKN…VSTKKKGGCN (63 aa)). Cystine bridges form between C31–C82, C35–C55, C41–C65, and C45–C67. N83 is subject to Asparagine amide.

The protein belongs to the long (4 C-C) scorpion toxin superfamily. Sodium channel inhibitor family. Alpha subfamily. Expressed by the venom gland.

The protein resides in the secreted. In terms of biological role, alpha toxins bind voltage-independently at site-3 of sodium channels (Nav) and inhibit the inactivation of the activated channels, thereby blocking neuronal transmission. The protein is Toxin AahP1005 of Androctonus australis (Sahara scorpion).